The chain runs to 460 residues: Sorting nexin-4 (460 aa).

The segment covering 1–16 (MTATEQQQDDFSNVSW) has biased composition (polar residues). Residues 1–53 (MTATEQQQDDFSNVSWSEHVHDQQTRSVPDAEEPGHDMNAPGTGLERDAPSLG) are disordered. In terms of domain architecture, PX spans 56 to 178 (KLECTVDTPI…TFLESPDWNA (123 aa)). 3 coiled-coil regions span residues 238 to 266 (EKVI…QKLI), 306 to 337 (RDMQ…EYLN), and 374 to 403 (QARR…TSDM).

Belongs to the sorting nexin family. Forms a complex with ATG20 and ATG17.

The protein localises to the cytoplasm. It is found in the membrane. The protein resides in the endosome membrane. Sorting nexin involved in the separation or division of vacuoles throughout the entire life cycle of the cells. Involved in retrieval of late-Golgi SNAREs from post-Golgi endosomes to the trans-Golgi network, for cytoplasm to vacuole transport (Cvt), and autophagy of large cargos including mitophagy, pexophagy and glycophagy. Autophagy is required for proper vegetative growth, asexual/sexual reproduction, and full virulence. Autophagy is particularly involved in the biosynthesis of deoxynivalenol (DON), an important virulence determinant. The protein is Sorting nexin-4 of Gibberella zeae (strain ATCC MYA-4620 / CBS 123657 / FGSC 9075 / NRRL 31084 / PH-1) (Wheat head blight fungus).